The sequence spans 282 residues: Transcription factor MYB20 (282 aa).

2 consecutive HTH myb-type domains span residues 9–61 (KVGL…TNYL) and 62–116 (RPDL…KKKL). 2 consecutive DNA-binding regions (H-T-H motif) follow at residues 37–61 (WRAV…TNYL) and 89–112 (WSKI…NTHI).

In terms of tissue distribution, expressed in chalaza of mature seeds, cotyledons, rosette leaves, cauline leaves, veins of stems, mature siliques, sepals and styles. Expressed at low levels in roots.

Its subcellular location is the nucleus. In terms of biological role, transcription factor that acts as a positive regulator of abscisic acid (ABA) signaling in response to salt stress. Acts as a negative regulator ABI1, ABI2 and PP2CA, which are protein phosphatases 2C acting as negative regulator of ABA signaling. Binds to the DNA specific sequence and core element 5'-ACGT-3' found in the promoters of ABI1 and PP2CA to negatively regulate their expression during ABA-dependent salt stress response. The sequence is that of Transcription factor MYB20 from Arabidopsis thaliana (Mouse-ear cress).